Consider the following 185-residue polypeptide: Peptidoglycan-recognition protein SC1a/b (185 aa).

An N-terminal signal peptide occupies residues 1 to 21 (MVSKVALLLAVLVCSQYMAQG). The N-acetylmuramoyl-L-alanine amidase domain maps to 46–170 (SYAIIHHTAG…RQVSATECPG (125 aa)). H51 is a Zn(2+) binding site. A disulfide bond links C58 and C64. The Zn(2+) site is built by H160 and C168.

The protein belongs to the N-acetylmuramoyl-L-alanine amidase 2 family. Requires Zn(2+) as cofactor.

Its subcellular location is the secreted. It catalyses the reaction Hydrolyzes the link between N-acetylmuramoyl residues and L-amino acid residues in certain cell-wall glycopeptides.. N-acetylmuramyl-L-alanine amidase involved in innate immunity by degrading bacterial peptidoglycans (PGN). Plays a scavenger role by digesting biologically active PGN into biologically inactive fragments. Has no direct bacteriolytic activity. The chain is Peptidoglycan-recognition protein SC1a/b (PGRP-SC1a) from Drosophila simulans (Fruit fly).